A 104-amino-acid chain; its full sequence is Small ribosomal subunit protein bS18c (104 aa).

The interval 84 to 104 is disordered; it reads DKQFERSESTPRTIGLRTRNK.

It belongs to the bacterial ribosomal protein bS18 family. Part of the 30S ribosomal subunit.

The protein localises to the plastid. It localises to the chloroplast. The chain is Small ribosomal subunit protein bS18c from Cucumis sativus (Cucumber).